Consider the following 452-residue polypeptide: GTPase Der (452 aa).

EngA-type G domains lie at 9–170 (KIIA…PEED) and 185–362 (LQIV…KTWN). GTP is bound by residues 15–22 (GRPNVGKS), 62–66 (DTPGF), 124–127 (NKCE), 191–198 (GRPNAGKS), 238–242 (DTAGL), and 303–306 (NKWD). Residues 363 to 448 (KKITTSKLNE…PIRFNYIKTK (86 aa)) enclose the KH-like domain.

This sequence belongs to the TRAFAC class TrmE-Era-EngA-EngB-Septin-like GTPase superfamily. EngA (Der) GTPase family. As to quaternary structure, associates with the 50S ribosomal subunit.

GTPase that plays an essential role in the late steps of ribosome biogenesis. The polypeptide is GTPase Der (Rickettsia bellii (strain OSU 85-389)).